We begin with the raw amino-acid sequence, 407 residues long: Tryptophan synthase beta chain (407 aa).

An N6-(pyridoxal phosphate)lysine modification is found at lysine 86.

This sequence belongs to the TrpB family. In terms of assembly, tetramer of two alpha and two beta chains. Requires pyridoxal 5'-phosphate as cofactor.

The enzyme catalyses (1S,2R)-1-C-(indol-3-yl)glycerol 3-phosphate + L-serine = D-glyceraldehyde 3-phosphate + L-tryptophan + H2O. It participates in amino-acid biosynthesis; L-tryptophan biosynthesis; L-tryptophan from chorismate: step 5/5. The beta subunit is responsible for the synthesis of L-tryptophan from indole and L-serine. In Shewanella woodyi (strain ATCC 51908 / MS32), this protein is Tryptophan synthase beta chain.